The chain runs to 307 residues: Ornithine carbamoyltransferase (307 aa).

Residues 50-53 (STRT), Gln77, Arg101, and 128-131 (HPCQ) each bind carbamoyl phosphate. L-ornithine contacts are provided by residues Asn160, Asp224, and 228 to 229 (SM). Residues 264-265 (CL) and Arg292 each bind carbamoyl phosphate.

This sequence belongs to the aspartate/ornithine carbamoyltransferase superfamily. OTCase family.

It localises to the cytoplasm. The catalysed reaction is carbamoyl phosphate + L-ornithine = L-citrulline + phosphate + H(+). Its pathway is amino-acid biosynthesis; L-arginine biosynthesis; L-arginine from L-ornithine and carbamoyl phosphate: step 1/3. In terms of biological role, reversibly catalyzes the transfer of the carbamoyl group from carbamoyl phosphate (CP) to the N(epsilon) atom of ornithine (ORN) to produce L-citrulline. The polypeptide is Ornithine carbamoyltransferase (Clavibacter michiganensis subsp. michiganensis (strain NCPPB 382)).